The following is a 148-amino-acid chain: Protein SOB FIVE-LIKE 1 (148 aa).

The span at 1 to 10 (MESPRNHGGS) shows a compositional bias: basic and acidic residues. 2 disordered regions span residues 1 to 20 (MESP…SCES) and 33 to 148 (NDQS…SKTK). The SOFL-A motif lies at 20–25 (SGWTMY). Positions 54–76 (DGYENDDGDTSDDGGDEESDDSM) are enriched in acidic residues. Positions 75 to 84 (SMASDASSGP) match the SOFL-B motif. The span at 91–101 (HINKHAARKNG) shows a compositional bias: basic residues. Residues 111–128 (QHTEKTISNEGEKSDLKA) are compositionally biased toward basic and acidic residues.

Belongs to the SOFL plant protein family. Predominantly expressed in the vascular tissues of seedlings, developing leaves, flowers and siliques, but barely detectable in roots and stems.

The protein resides in the cytoplasm. It localises to the nucleus. Involved in cytokinin-mediated development. Together with SOFL2, triggers the endogenous content of specific bioactive cytokinins derived from the biosynthetic intermediates trans-zeatin riboside monophosphate (tZRMP) and N(6)-(Delta(2)-isopentenyl)adenosine monophosphate (iPRMP) such as N-glucosides trans-zeatin 7-glucoside (tZ7G), cis-zeatin 7-glucoside (cZ7G) and N(6)-(Delta(2)-isopentenyl)adenine 7-glucoside (iP7G). The protein is Protein SOB FIVE-LIKE 1 of Arabidopsis thaliana (Mouse-ear cress).